The sequence spans 324 residues: Hydroxylase/desaturase CTB9 (324 aa).

The segment covering 1 to 11 (MTSTITTTETL) has biased composition (polar residues). 2 disordered regions span residues 1–33 (MTSTITTTETLQDAVPFVAPPSPPEDTSNKELP) and 288–308 (TARRVPHSSFPTPDDFGEPRA).

Belongs to the asaB hydroxylase/desaturase family.

It participates in mycotoxin biosynthesis. Hydroxylase/desaturase; part of the gene cluster that mediates the biosynthesis of cercosporin, a light-activated, non-host-selective toxin. The perylenequinone chromophore of cercosporin absorbs light energy to attain an electronically-activated triplet state and produces active oxygen species such as the hydroxyl radical, superoxide, hydrogen peroxide or singlet oxygen upon reaction with oxygen molecules. These reactive oxygen species cause damage to various cellular components including lipids, proteins and nucleic acids. The first step of cercosporin biosynthesis is performed by the polyketide synthase CTB1 which catalyzes the formation of nor-toralactone. The starter unit acyltransferase (SAT) domain of CTB1 initiates polyketide extension by the selective utilization of acetyl-CoA, which is elongated to the heptaketide in the beta-ketoacyl synthase (KS) domain by successive condensations with six malonyl units introduced by the malonyl acyltransferase (MAT) domain. The product template (PT) domain catalyzes C4-C9 and C2-C11 aldol cyclizations and dehydrations to a trihydroxynaphthalene, which is thought to be delivered to the thioesterase (TE) domain for product release. The bifunctional enzyme CTB3 then methylates nor-toralactone to toralactone before conducting an unusual oxidative aromatic ring opening. The O-methyltransferase CTB2 further methylates the nascent OH-6 of the CBT3 product, blocking further oxidation at this site before the reductase CTB6 reduces the 2-oxopropyl ketone at position C7, giving naphthalene. The FAD-dependent monooxygenase CTB5 in concert with the multicopper oxidase CTB12 are responsible for homodimerization of naphthalene with CTB7 installing the dioxepine moiety, finally producing cercosporin. The fasciclin domain-containing protein CTB11 might act with CTB5 and CTB12 whereas the roles of CTB9 and CTB10 have still to be elucidated. The protein is Hydroxylase/desaturase CTB9 of Cercospora beticola (Sugarbeet leaf spot fungus).